A 447-amino-acid chain; its full sequence is Large ribosomal subunit protein bL27m (447 aa).

Composition is skewed to basic and acidic residues over residues 377-402 (QREA…KAEK) and 409-447 (KVEK…EKKD). Residues 377-447 (QREAKKAREG…KKDSKTEKKD (71 aa)) form a disordered region.

Belongs to the bacterial ribosomal protein bL27 family. Component of the mitochondrial large ribosomal subunit (mt-LSU). Mature N.crassa 74S mitochondrial ribosomes consist of a small (37S) and a large (54S) subunit. The 37S small subunit contains a 16S ribosomal RNA (16S mt-rRNA) and 32 different proteins. The 54S large subunit contains a 23S rRNA (23S mt-rRNA) and 42 different proteins.

The protein localises to the mitochondrion. Functionally, component of the mitochondrial ribosome (mitoribosome), a dedicated translation machinery responsible for the synthesis of mitochondrial genome-encoded proteins, including at least some of the essential transmembrane subunits of the mitochondrial respiratory chain. The mitoribosomes are attached to the mitochondrial inner membrane and translation products are cotranslationally integrated into the membrane. This is Large ribosomal subunit protein bL27m (mrp7) from Neurospora crassa (strain ATCC 24698 / 74-OR23-1A / CBS 708.71 / DSM 1257 / FGSC 987).